The following is a 128-amino-acid chain: CD59 glycoprotein (128 aa).

Residues 1–25 (MGIQGGSVLFGLLLVLAVFCHSGHS) form the signal peptide. The UPAR/Ly6 domain occupies 26-108 (LQCYNCPNPT…QLENGGTSLS (83 aa)). 5 cysteine pairs are disulfide-bonded: C28/C51, C31/C38, C44/C64, C70/C88, and C89/C94. N43 carries N-linked (GlcNAc...) asparagine glycosylation. A lipid anchor (GPI-anchor amidated asparagine) is attached at N102. Residues 103–128 (GGTSLSEKTVVLLVTLLLAAAWCLHP) constitute a propeptide, removed in mature form.

As to quaternary structure, interacts with T-cell surface antigen CD2. In terms of processing, N- and O-glycosylated.

It localises to the cell membrane. The protein resides in the secreted. Functionally, potent inhibitor of the complement membrane attack complex (MAC) action, which protects self-cells from damage during complement activation. Acts by binding to the beta-haipins of C8 (C8A and C8B) components of the assembling MAC, forming an intermolecular beta-sheet that prevents incorporation of the multiple copies of C9 required for complete formation of the osmolytic pore. The chain is CD59 glycoprotein from Chlorocebus aethiops (Green monkey).